The primary structure comprises 478 residues: Membrane-bound lytic murein transglycosylase F (478 aa).

The first 22 residues, 1-22 (MTRFLFAIILGLLLTACQQETV), serve as a signal peptide directing secretion. Residues 23 to 257 (EETEFVPHKL…HLNEKYFGHV (235 aa)) form a non-LT domain region. The tract at residues 258–478 (KRFDYIDTRA…PGTLSPDKPK (221 aa)) is LT domain. Glu302 is an active-site residue. A disordered region spans residues 447–478 (KQQNSEEVAPSDLTAEETPVPAPGTLSPDKPK).

The protein in the N-terminal section; belongs to the bacterial solute-binding protein 3 family. In the C-terminal section; belongs to the transglycosylase Slt family.

Its subcellular location is the cell outer membrane. It catalyses the reaction Exolytic cleavage of the (1-&gt;4)-beta-glycosidic linkage between N-acetylmuramic acid (MurNAc) and N-acetylglucosamine (GlcNAc) residues in peptidoglycan, from either the reducing or the non-reducing ends of the peptidoglycan chains, with concomitant formation of a 1,6-anhydrobond in the MurNAc residue.. In terms of biological role, murein-degrading enzyme that degrades murein glycan strands and insoluble, high-molecular weight murein sacculi, with the concomitant formation of a 1,6-anhydromuramoyl product. Lytic transglycosylases (LTs) play an integral role in the metabolism of the peptidoglycan (PG) sacculus. Their lytic action creates space within the PG sacculus to allow for its expansion as well as for the insertion of various structures such as secretion systems and flagella. This Shewanella oneidensis (strain ATCC 700550 / JCM 31522 / CIP 106686 / LMG 19005 / NCIMB 14063 / MR-1) protein is Membrane-bound lytic murein transglycosylase F.